Here is a 393-residue protein sequence, read N- to C-terminus: Cysteine protease ATG4B (393 aa).

M1 is subject to N-acetylmethionine. S34 carries the post-translational modification Phosphoserine. The active-site Nucleophile is C74. C189 bears the S-nitrosocysteine mark. Residues D278 and H280 contribute to the active site. S-nitrosocysteine occurs at positions 292 and 301. A disulfide bridge links C292 with C361. Residues S316 and S383 each carry the phosphoserine modification. An LIR motif is present at residues 388-391; sequence FEIL. Residue S392 is modified to Phosphoserine.

Belongs to the peptidase C54 family. Interacts with PFKP; promoting phosphorylation of ATG4B at Ser-34. Interacts with GBP7. Post-translationally, phosphorylation at Ser-383 and Ser-392 promotes autophagy by increasing protein delipidation activity without affecting proteolytic activation of ATG8 proteins. Phosphorylation at Ser-316 by ULK1 inhibits autophagy by decreasing both proteolytic activation and delipidation activities. Phosphorylation at Ser-316 is dephosphorylated by protein phosphatase 2A (PP2A). Phosphorylation at Ser-34 by AKT2 promotes its hydrolase activity, leading to increased proteolytic activation and delipidation of ATG8 family proteins. Phosphorylation at Ser-34 by AKT1 promotes mitochondrial localization and inhibition of the F1F0-ATP synthase activity, leading to elevation of mitochondrial reactive oxygen species (ROS). In terms of processing, ubiquitinated by RNF5, leading to its degradation by the proteasome. S-nitrosylation in response to high glucose decreases both proteolytic activation and delipidation activities. Post-translationally, O-glycosylated by OGT, leading to increase protease activity, thereby promoting the proteolytic activation of ATG8 family proteins. In terms of processing, forms reversible intrachain disulfide bonds in response to oxidative stress. Forms interchain disulfide bonds, leading to formation of homooligomers in response to oxidation.

The protein resides in the cytoplasm. Its subcellular location is the cytosol. The protein localises to the cytoplasmic vesicle. It is found in the autophagosome. It localises to the endoplasmic reticulum. The protein resides in the mitochondrion. The catalysed reaction is [protein]-C-terminal L-amino acid-glycyl-phosphatidylethanolamide + H2O = [protein]-C-terminal L-amino acid-glycine + a 1,2-diacyl-sn-glycero-3-phosphoethanolamine. It catalyses the reaction [protein]-C-terminal L-amino acid-glycyl-phosphatidylserine + H2O = [protein]-C-terminal L-amino acid-glycine + a 1,2-diacyl-sn-glycero-3-phospho-L-serine. Its activity is regulated as follows. Inhibited by N-ethylmaleimide. Redox-regulated during autophagy since reducing conditions activate ATG4A whereas an oxidizing environment such as the presence of H(2)O(2) inhibits its activity. The cysteine protease activity compounds is inhibited by styrylquinoline compounds 4-28 and LV-320. Functionally, cysteine protease that plays a key role in autophagy by mediating both proteolytic activation and delipidation of ATG8 family proteins. Required for canonical autophagy (macroautophagy), non-canonical autophagy as well as for mitophagy. The protease activity is required for proteolytic activation of ATG8 family proteins: cleaves the C-terminal amino acid of ATG8 proteins MAP1LC3A, MAP1LC3B, MAP1LC3C, GABARAPL1, GABARAPL2 and GABARAP, to reveal a C-terminal glycine. Exposure of the glycine at the C-terminus is essential for ATG8 proteins conjugation to phosphatidylethanolamine (PE) and insertion to membranes, which is necessary for autophagy. Protease activity is also required to counteract formation of high-molecular weight conjugates of ATG8 proteins (ATG8ylation): acts as a deubiquitinating-like enzyme that removes ATG8 conjugated to other proteins, such as ATG3. In addition to the protease activity, also mediates delipidation of ATG8 family proteins. Catalyzes delipidation of PE-conjugated forms of ATG8 proteins during macroautophagy. Also involved in non-canonical autophagy, a parallel pathway involving conjugation of ATG8 proteins to single membranes at endolysosomal compartments, by catalyzing delipidation of ATG8 proteins conjugated to phosphatidylserine (PS). Compared to other members of the family (ATG4A, ATG4C or ATG4C), constitutes the major protein for proteolytic activation of ATG8 proteins, while it displays weaker delipidation activity than other ATG4 paralogs. Involved in phagophore growth during mitophagy independently of its protease activity and of ATG8 proteins: acts by regulating ATG9A trafficking to mitochondria and promoting phagophore-endoplasmic reticulum contacts during the lipid transfer phase of mitophagy. This is Cysteine protease ATG4B from Rattus norvegicus (Rat).